The following is a 102-amino-acid chain: Small ribosomal subunit protein bS6 (102 aa).

The protein belongs to the bacterial ribosomal protein bS6 family.

Its function is as follows. Binds together with bS18 to 16S ribosomal RNA. This Deinococcus deserti (strain DSM 17065 / CIP 109153 / LMG 22923 / VCD115) protein is Small ribosomal subunit protein bS6.